Reading from the N-terminus, the 247-residue chain is Sensory rhodopsin-1 (247 aa).

Residues 1–4 (MTGA) lie on the Extracellular side of the membrane. The chain crosses the membrane as a helical span at residues 5-26 (VSAAYWIAAVAFLVGLGITAAL). Residues 27–35 (YAKLGESED) lie on the Cytoplasmic side of the membrane. Residues 36-57 (RGRLAALAVIPGFAGLAYAGMA) form a helical membrane-spanning segment. The Extracellular segment spans residues 58-71 (LGIGTVTVNGAELV). A helical membrane pass occupies residues 72 to 93 (GLRYVDWIVTTPLLVGFIGYVA). Residues 94–96 (GAS) are Cytoplasmic-facing. The helical transmembrane segment at 97–119 (RRAIAGVMLADALMIAFGAGAVV) threads the bilayer. Residues 120–123 (TGGT) lie on the Extracellular side of the membrane. A helical membrane pass occupies residues 124–151 (LKWVLFGVSSIFHVTLFAYLYVVFPRAV). Topologically, residues 152-154 (PDD) are cytoplasmic. Residues 155–182 (PMQRGLFSLLKNHVGLLWLAYPFVWLMG) traverse the membrane as a helical segment. The Extracellular portion of the chain corresponds to 183–190 (PAGIGFTT). Residues 191–223 (GVGAALTYAFLDVLAKVPYVYFFYARRQAFTDV) traverse the membrane as a helical segment. The residue at position 206 (lysine 206) is an N6-(retinylidene)lysine. The Cytoplasmic portion of the chain corresponds to 224–247 (VSAATADREDATDAVGDGAPTAAD).

The protein belongs to the archaeal/bacterial/fungal opsin family. Interacts with HTR-I.

It is found in the cell membrane. In terms of biological role, involved in the control of phototaxis. Mediates both photoattractant (in the orange light) and photophobic (in the near UV light) responses. The signal is then transmitted to the sensory rhodopsin I transducer (HTR-I). The polypeptide is Sensory rhodopsin-1 (sop1) (Halobacterium sp. (strain SG1)).